The sequence spans 199 residues: dITP/XTP pyrophosphatase (199 aa).

7–12 (SNNRGK) serves as a coordination point for substrate. The active-site Proton acceptor is Asp68. Asp68 is a binding site for Mg(2+). Residues Ala69, 154-157 (FGFD), Lys177, and 182-183 (HR) contribute to the substrate site.

It belongs to the HAM1 NTPase family. In terms of assembly, homodimer. The cofactor is Mg(2+).

The catalysed reaction is XTP + H2O = XMP + diphosphate + H(+). It catalyses the reaction dITP + H2O = dIMP + diphosphate + H(+). The enzyme catalyses ITP + H2O = IMP + diphosphate + H(+). Pyrophosphatase that catalyzes the hydrolysis of nucleoside triphosphates to their monophosphate derivatives, with a high preference for the non-canonical purine nucleotides XTP (xanthosine triphosphate), dITP (deoxyinosine triphosphate) and ITP. Seems to function as a house-cleaning enzyme that removes non-canonical purine nucleotides from the nucleotide pool, thus preventing their incorporation into DNA/RNA and avoiding chromosomal lesions. In Albidiferax ferrireducens (strain ATCC BAA-621 / DSM 15236 / T118) (Rhodoferax ferrireducens), this protein is dITP/XTP pyrophosphatase.